Consider the following 92-residue polypeptide: uncharacterized protein (92 aa).

This is an uncharacterized protein from Pasteurella multocida (strain Pm70).